The primary structure comprises 439 residues: Methionine aminopeptidase 2-2 (439 aa).

The disordered stretch occupies residues 1 to 90 (MAAQAPPTDE…SQLFPDKQYP (90 aa)). The segment covering 10–23 (ELSKLSVEDADNKP) has biased composition (basic and acidic residues). The span at 35–45 (DEDDSEDDAED) shows a compositional bias: acidic residues. The span at 54–68 (AKKKKKRKPRKKKKN) shows a compositional bias: basic residues. Histidine 192 is a binding site for substrate. 3 residues coordinate a divalent metal cation: aspartate 212, aspartate 223, and histidine 292. Substrate is bound at residue histidine 300. A divalent metal cation is bound by residues glutamate 325 and glutamate 420.

The protein belongs to the peptidase M24A family. Methionine aminopeptidase eukaryotic type 2 subfamily. Requires Co(2+) as cofactor. Zn(2+) serves as cofactor. It depends on Mn(2+) as a cofactor. The cofactor is Fe(2+).

The protein localises to the cytoplasm. The enzyme catalyses Release of N-terminal amino acids, preferentially methionine, from peptides and arylamides.. Cotranslationally removes the N-terminal methionine from nascent proteins. The N-terminal methionine is often cleaved when the second residue in the primary sequence is small and uncharged (Met-Ala-, Cys, Gly, Pro, Ser, Thr, or Val). The chain is Methionine aminopeptidase 2-2 from Chaetomium globosum (strain ATCC 6205 / CBS 148.51 / DSM 1962 / NBRC 6347 / NRRL 1970) (Soil fungus).